Reading from the N-terminus, the 1085-residue chain is DNA mismatch repair protein MutS (1085 aa).

The segment at 533 to 564 is disordered; sequence DEDLFGEEEQNAPPVGSSNHAVGTQPSADDEA. Over residues 548-559 the composition is skewed to polar residues; the sequence is GSSNHAVGTQPS. Position 812–819 (812–819) interacts with ATP; it reads GPNMSGKS. The tract at residues 997–1042 is disordered; it reads ERRAPRSAPPTVPARGDDRRSAGRASSSGAGAARGEQGRTLPDGQL. The segment covering 1019 to 1031 has biased composition (low complexity); sequence GRASSSGAGAARG.

The protein belongs to the DNA mismatch repair MutS family.

Its function is as follows. This protein is involved in the repair of mismatches in DNA. It is possible that it carries out the mismatch recognition step. This protein has a weak ATPase activity. The sequence is that of DNA mismatch repair protein MutS from Roseiflexus sp. (strain RS-1).